We begin with the raw amino-acid sequence, 120 residues long: Large ribosomal subunit protein uL18 (120 aa).

It belongs to the universal ribosomal protein uL18 family. As to quaternary structure, part of the 50S ribosomal subunit; part of the 5S rRNA/L5/L18/L25 subcomplex. Contacts the 5S and 23S rRNAs.

In terms of biological role, this is one of the proteins that bind and probably mediate the attachment of the 5S RNA into the large ribosomal subunit, where it forms part of the central protuberance. This chain is Large ribosomal subunit protein uL18, found in Rhizobium rhizogenes (strain K84 / ATCC BAA-868) (Agrobacterium radiobacter).